A 318-amino-acid polypeptide reads, in one-letter code: UDP-3-O-acylglucosamine N-acyltransferase (318 aa).

H231 functions as the Proton acceptor in the catalytic mechanism.

The protein belongs to the transferase hexapeptide repeat family. LpxD subfamily. Homotrimer.

The enzyme catalyses a UDP-3-O-[(3R)-3-hydroxyacyl]-alpha-D-glucosamine + a (3R)-hydroxyacyl-[ACP] = a UDP-2-N,3-O-bis[(3R)-3-hydroxyacyl]-alpha-D-glucosamine + holo-[ACP] + H(+). It participates in bacterial outer membrane biogenesis; LPS lipid A biosynthesis. In terms of biological role, catalyzes the N-acylation of UDP-3-O-acylglucosamine using 3-hydroxyacyl-ACP as the acyl donor. Is involved in the biosynthesis of lipid A, a phosphorylated glycolipid that anchors the lipopolysaccharide to the outer membrane of the cell. In Campylobacter jejuni subsp. doylei (strain ATCC BAA-1458 / RM4099 / 269.97), this protein is UDP-3-O-acylglucosamine N-acyltransferase.